Consider the following 277-residue polypeptide: Pantothenate synthetase (277 aa).

26–33 (MGYLHQGH) contacts ATP. His-33 acts as the Proton donor in catalysis. Residue Gln-57 participates in (R)-pantoate binding. Gln-57 provides a ligand contact to beta-alanine. Position 143–146 (143–146 (GQKD)) interacts with ATP. Gln-149 is a binding site for (R)-pantoate. Residues Val-172 and 180–183 (LSSR) contribute to the ATP site.

It belongs to the pantothenate synthetase family. As to quaternary structure, homodimer.

Its subcellular location is the cytoplasm. It catalyses the reaction (R)-pantoate + beta-alanine + ATP = (R)-pantothenate + AMP + diphosphate + H(+). The protein operates within cofactor biosynthesis; (R)-pantothenate biosynthesis; (R)-pantothenate from (R)-pantoate and beta-alanine: step 1/1. Catalyzes the condensation of pantoate with beta-alanine in an ATP-dependent reaction via a pantoyl-adenylate intermediate. In Chloroflexus aggregans (strain MD-66 / DSM 9485), this protein is Pantothenate synthetase.